We begin with the raw amino-acid sequence, 912 residues long: E3 ubiquitin-protein ligase HACE1 (912 aa).

ANK repeat units lie at residues 23–55 (LPED…NSKF), 64–93 (VKRS…DPNY), 97–126 (SGCT…DVNI), 130–159 (EGLT…NVDV), 163–192 (MGQT…DINR), 196–226 (SGAT…YLPD), and 228–253 (NGVT…QHHP). In terms of domain architecture, HECT spans 577–912 (NCEKLKQGIA…HCGSYGYTMA (336 aa)). Cysteine 879 serves as the catalytic Glycyl thioester intermediate.

The protein resides in the golgi apparatus. The protein localises to the golgi stack membrane. It localises to the cytoplasm. It is found in the endoplasmic reticulum. The catalysed reaction is S-ubiquitinyl-[E2 ubiquitin-conjugating enzyme]-L-cysteine + [acceptor protein]-L-lysine = [E2 ubiquitin-conjugating enzyme]-L-cysteine + N(6)-ubiquitinyl-[acceptor protein]-L-lysine.. The protein operates within protein modification; protein ubiquitination. Functionally, E3 ubiquitin-protein ligase involved in Golgi membrane fusion and regulation of small GTPases. Acts as a regulator of Golgi membrane dynamics during the cell cycle: recruited to Golgi membrane by Rab proteins and regulates postmitotic Golgi membrane fusion. Acts by mediating ubiquitination during mitotic Golgi disassembly, ubiquitination serving as a signal for Golgi reassembly later, after cell division. The protein is E3 ubiquitin-protein ligase HACE1 (hace1) of Xenopus tropicalis (Western clawed frog).